The following is a 439-amino-acid chain: Serine hydroxymethyltransferase (439 aa).

126–128 contributes to the (6S)-5,6,7,8-tetrahydrofolate binding site; it reads AHV. Lys-232 carries the N6-(pyridoxal phosphate)lysine modification.

It belongs to the SHMT family. In terms of assembly, homodimer. It depends on pyridoxal 5'-phosphate as a cofactor.

It is found in the cytoplasm. It participates in amino-acid biosynthesis; glycine biosynthesis; glycine from L-serine: step 1/1. In terms of biological role, catalyzes the reversible interconversion of serine and glycine with a modified folate serving as the one-carbon carrier. Also exhibits a pteridine-independent aldolase activity toward beta-hydroxyamino acids, producing glycine and aldehydes, via a retro-aldol mechanism. This Staphylothermus marinus (strain ATCC 43588 / DSM 3639 / JCM 9404 / F1) protein is Serine hydroxymethyltransferase.